The primary structure comprises 455 residues: 3-phosphoshikimate 1-carboxyvinyltransferase (455 aa).

The segment covering 1–19 has biased composition (polar residues); that stretch reads MSHGASSRPATARKSSGLS. Residues 1–25 form a disordered region; the sequence is MSHGASSRPATARKSSGLSGTVRIP. K28 lines the phosphoenolpyruvate pocket. Positions 29 and 33 each coordinate 3-phosphoshikimate. Residue R128 coordinates phosphoenolpyruvate. 3-phosphoshikimate-binding residues include S173, A174, Q175, D326, and K353. Q175 contacts phosphoenolpyruvate. The active-site Proton acceptor is D326. Phosphoenolpyruvate contacts are provided by R357 and R405.

Belongs to the EPSP synthase family. Monomer.

The protein resides in the cytoplasm. It catalyses the reaction 3-phosphoshikimate + phosphoenolpyruvate = 5-O-(1-carboxyvinyl)-3-phosphoshikimate + phosphate. It functions in the pathway metabolic intermediate biosynthesis; chorismate biosynthesis; chorismate from D-erythrose 4-phosphate and phosphoenolpyruvate: step 6/7. With respect to regulation, is resistant to inhibition by glyphosate (glyphosate-tolerant) like other members of class II EPSPS, in contrast to class I EPSPS, which is glyphosate-sensitive. Is much less sensitive to inhibition by the (R)-difluoromethyl and (R)-phosphonate analogs of the tetrahedral reaction intermediate than the representative class I EPSPS from E.coli. Is highly activated in the presence of cations, such as NH4(+), Rb(+), and K(+). Its function is as follows. Catalyzes the transfer of the enolpyruvyl moiety of phosphoenolpyruvate (PEP) to the 5-hydroxyl of shikimate-3-phosphate (S3P) to produce enolpyruvyl shikimate-3-phosphate and inorganic phosphate. The polypeptide is 3-phosphoshikimate 1-carboxyvinyltransferase (Agrobacterium sp. (strain CP4)).